The following is a 466-amino-acid chain: Vimentin (466 aa).

Composition is skewed to low complexity over residues 1–13 (MSTRSVSSSSYRR) and 20–33 (TSSRPSSNRSYVTT). The segment at 1 to 33 (MSTRSVSSSSYRRMFGGSGTSSRPSSNRSYVTT) is disordered. N-acetylserine is present on Ser2. The head stretch occupies residues 2–95 (STRSVSSSSY…FSLADAINTE (94 aa)). At Ser5 the chain carries Phosphoserine. At Ser7 the chain carries Phosphoserine; by PKA and PKC; alternate. An O-linked (GlcNAc) serine; alternate glycan is attached at Ser7. At Ser8 the chain carries Phosphoserine. A phosphoserine; by PKC mark is found at Ser9 and Ser10. Thr20 bears the Phosphothreonine mark. Phosphoserine is present on residues Ser25 and Ser26. Thr33 carries O-linked (GlcNAc) threonine glycosylation. A glycan (O-linked (GlcNAc) serine; alternate) is linked at Ser34. At Ser34 the chain carries Phosphoserine; by PKC; alternate. Position 39 is a phosphoserine; by CaMK2, PKA, PKC and ROCK2 (Ser39). Ser42 is modified (phosphoserine; by PKC). Ser47 is subject to Phosphoserine; by PKA. Phosphoserine is present on residues Ser49 and Ser51. Phosphotyrosine is present on Tyr53. Ser55 and Ser56 each carry phosphoserine. Tyr61 carries the phosphotyrosine modification. Ser66 carries the phosphoserine; by PKA and PKC modification. The residue at position 72 (Ser72) is a Phosphoserine; by AURKB and ROCK2. A phosphoserine mark is found at Ser73, Ser83, and Ser87. Residues 96–131 (FKNTRTNEKVELQELNDRFANYIDKVRFLEQQNKIL) are coil 1A. Residues 96–131 (FKNTRTNEKVELQELNDRFANYIDKVRFLEQQNKIL) are a coiled coil. One can recognise an IF rod domain in the interval 103–411 (EKVELQELND…KLLEGEESRI (309 aa)). Lys104 is covalently cross-linked (Glycyl lysine isopeptide (Lys-Gly) (interchain with G-Cter in SUMO2)). Tyr117 is modified (phosphotyrosine). An N6-acetyllysine; alternate mark is found at Lys120, Lys129, and Lys139. N6-succinyllysine; alternate occurs at positions 120 and 129. Residues Lys120, Lys129, and Lys139 each participate in a glycyl lysine isopeptide (Lys-Gly) (interchain with G-Cter in SUMO2); alternate cross-link. Residues 132–153 (LAELEQLKGQGKSRLGDLYEEE) are linker 1. At Ser144 the chain carries Phosphoserine. Positions 154–245 (MRELRRQVDQ…KLHDEEIQEL (92 aa)) form a coiled coil. The interval 154-245 (MRELRRQVDQ…KLHDEEIQEL (92 aa)) is coil 1B. The residue at position 168 (Lys168) is an N6-acetyllysine. Lys188 bears the N6-acetyllysine; alternate mark. At Lys188 the chain carries N6-succinyllysine; alternate. Ser214 is modified (phosphoserine). Residue Lys223 is modified to N6-acetyllysine; alternate. Residue Lys223 forms a Glycyl lysine isopeptide (Lys-Gly) (interchain with G-Cter in SUMO2); alternate linkage. Ser226 bears the Phosphoserine mark. Lys235 carries the post-translational modification N6-acetyllysine. A linker 12 region spans residues 246–268 (QAQIQEQHVQIDVDVSKPDLTAA). Lys262 participates in a covalent cross-link: Glycyl lysine isopeptide (Lys-Gly) (interchain with G-Cter in SUMO2). The interval 269 to 407 (LRDVRQQYES…ATYRKLLEGE (139 aa)) is coil 2. Position 294 is an N6-acetyllysine; alternate (Lys294). An N6-succinyllysine; alternate modification is found at Lys294. Lys294 participates in a covalent cross-link: Glycyl lysine isopeptide (Lys-Gly) (interchain with G-Cter in SUMO2); alternate. Ser299 carries the post-translational modification Phosphoserine. Residues 303 to 407 (NRNNDALRQA…ATYRKLLEGE (105 aa)) adopt a coiled-coil conformation. Lys313 is covalently cross-linked (Glycyl lysine isopeptide (Lys-Gly) (interchain with G-Cter in SUMO2)). The residue at position 325 (Ser325) is a Phosphoserine. A [IL]-x-C-x-x-[DE] motif motif is present at residues 326–329 (LTCE). Lys373 carries the post-translational modification N6-acetyllysine; alternate. Lys373 is covalently cross-linked (Glycyl lysine isopeptide (Lys-Gly) (interchain with G-Cter in SUMO2); alternate). The tract at residues 408–466 (ESRISLPLPNFSSLNLRETNLESLPLVDTHSKRTLLIKTVETRDGQVINETSQHHDDLE) is tail. Phosphoserine occurs at positions 409, 412, 419, and 420. Position 426 is a phosphothreonine (Thr426). Ser430 bears the Phosphoserine mark. The residue at position 436 (Thr436) is a Phosphothreonine. Ser438 is modified (phosphoserine). Residue Lys439 forms a Glycyl lysine isopeptide (Lys-Gly) (interchain with G-Cter in SUMO2) linkage. Lys445 is modified (N6-acetyllysine; alternate). Residue Lys445 is modified to N6-succinyllysine; alternate. A Glycyl lysine isopeptide (Lys-Gly) (interchain with G-Cter in SUMO2); alternate cross-link involves residue Lys445. Lys445 participates in a covalent cross-link: Glycyl lysine isopeptide (Lys-Gly) (interchain with G-Cter in SUMO1); alternate. A phosphothreonine mark is found at Thr446 and Thr458. The residue at position 459 (Ser459) is a Phosphoserine.

This sequence belongs to the intermediate filament family. As to quaternary structure, homomer assembled from elementary dimers. Identified in complexes that contain VIM, EZR, AHNAK, BFSP1, BFSP2, ANK2, PLEC, PRX and spectrin. Interacts with BCAS3. Interacts with LGSN. Interacts with SYNM. Interacts (via rod region) with PLEC (via CH 1 domain). Interacts with STK33. Interacts with LARP6. Interacts with RAB8B. Interacts with TOR1A; the interaction associates TOR1A with the cytoskeleton. Interacts with TOR1AIP1. Interacts with TOR1AIP1. Interacts with DIAPH1. Interacts with EPPK1; interaction is dependent of higher-order structure of intermediate filament. Interacts with the non-receptor tyrosine kinase SRMS; the interaction leads to phosphorylation of VIM. Interacts with NOD2. Interacts (via head region) with CORO1C. Interacts with HDGF. Interacts with PRKCE (via phorbol-ester/DAG-type 2 domain). Interacts with BFSP2. Interacts with PPL. Interacts with PKP1 and PKP2. Interacts with SCRIB (via PDZ domains); the interaction protects SCRIB from proteasomal degradation and facilitates SCRIB localization to intermediate filaments, the interaction is reduced by cell contact inhibition. One of the most prominent phosphoproteins in various cells of mesenchymal origin. Phosphorylation is enhanced during cell division, at which time vimentin filaments are significantly reorganized. Phosphorylation by PKN1 inhibits the formation of filaments. Filament disassembly during mitosis is promoted by phosphorylation at Ser-55 as well as by nestin. Phosphorylated at Ser-56 by CDK5 during neutrophil secretion in the cytoplasm. Phosphorylated by STK33. Phosphorylated on tyrosine residues by SRMS. In terms of processing, S-nitrosylation is induced by interferon-gamma and oxidatively-modified low-densitity lipoprotein (LDL(ox)) possibly implicating the iNOS-S100A8/9 transnitrosylase complex.

It is found in the cytoplasm. It localises to the cytoskeleton. Its subcellular location is the nucleus matrix. The protein localises to the cell membrane. Functionally, vimentins are class-III intermediate filaments found in various non-epithelial cells, especially mesenchymal cells. Vimentin is attached to the nucleus, endoplasmic reticulum, and mitochondria, either laterally or terminally. Plays a role in cell directional movement, orientation, cell sheet organization and Golgi complex polarization at the cell migration front. Protects SCRIB from proteasomal degradation and facilitates its localization to intermediate filaments in a cell contact-mediated manner. In terms of biological role, involved with LARP6 in the stabilization of type I collagen mRNAs for CO1A1 and CO1A2. The sequence is that of Vimentin from Rattus norvegicus (Rat).